The primary structure comprises 966 residues: Probable LIM domain-containing serine/threonine-protein kinase DDB_G0286997 (966 aa).

2 consecutive LIM zinc-binding domains span residues 3-62 and 63-120; these read SRCG…LNAP and KCFK…KPPP. Disordered regions lie at residues 208 to 291 and 331 to 588; these read YSLS…PTED and PLNQ…EQQV. Residues 211–231 are compositionally biased toward low complexity; that stretch reads SSPSSSSSSSSSSSSSSSSPP. Positions 232–269 are enriched in polar residues; the sequence is NTFNKSSDFLRNPLNNNVKSSSSSIGGNFVNKSQQQQQ. Low complexity-rich tracts occupy residues 270-284 and 331-350; these read PIDSCSKSSISISPS and PLNQQPQQQQQQFKPQSPNL. Residues 374–389 show a composition bias toward polar residues; sequence TTTFSNPLLKTKNQSF. The span at 419-430 shows a compositional bias: pro residues; sequence PLPPPPITPIPS. The span at 431–449 shows a compositional bias: low complexity; it reads PSSSSIIINNQQQQQQESQ. Over residues 490 to 511 the composition is skewed to pro residues; it reads KPIVLPPPPLDMEQLPLPPPPL. Positions 513–526 are enriched in polar residues; that stretch reads SSQINQSLKSTQHN. A compositionally biased stretch (low complexity) spans 543–560; sequence IQKQSIPTRKPQLPQSSN. Pro residues predominate over residues 561-570; the sequence is PSPPSPPSPQ. Positions 702 to 959 constitute a Protein kinase domain; that stretch reads VIFGDVIAAG…DTLKKISESL (258 aa). ATP-binding positions include 708–716 and lysine 729; that span reads IAAGASGKV. Aspartate 825 acts as the Proton acceptor in catalysis.

This sequence belongs to the protein kinase superfamily. TKL Ser/Thr protein kinase family.

The catalysed reaction is L-seryl-[protein] + ATP = O-phospho-L-seryl-[protein] + ADP + H(+). The enzyme catalyses L-threonyl-[protein] + ATP = O-phospho-L-threonyl-[protein] + ADP + H(+). In Dictyostelium discoideum (Social amoeba), this protein is Probable LIM domain-containing serine/threonine-protein kinase DDB_G0286997.